The sequence spans 160 residues: Ribosomal RNA large subunit methyltransferase H (160 aa).

S-adenosyl-L-methionine-binding positions include L77, G109, and 128-133 (FSRLTF).

Belongs to the RNA methyltransferase RlmH family. Homodimer.

The protein resides in the cytoplasm. The enzyme catalyses pseudouridine(1915) in 23S rRNA + S-adenosyl-L-methionine = N(3)-methylpseudouridine(1915) in 23S rRNA + S-adenosyl-L-homocysteine + H(+). Its function is as follows. Specifically methylates the pseudouridine at position 1915 (m3Psi1915) in 23S rRNA. The polypeptide is Ribosomal RNA large subunit methyltransferase H (Desulfitobacterium hafniense (strain Y51)).